The primary structure comprises 92 residues: DNA-directed RNA polymerase subunit omega (92 aa).

Belongs to the RNA polymerase subunit omega family. The RNAP catalytic core consists of 2 alpha, 1 beta, 1 beta' and 1 omega subunit. When a sigma factor is associated with the core the holoenzyme is formed, which can initiate transcription.

The enzyme catalyses RNA(n) + a ribonucleoside 5'-triphosphate = RNA(n+1) + diphosphate. Promotes RNA polymerase assembly. Latches the N- and C-terminal regions of the beta' subunit thereby facilitating its interaction with the beta and alpha subunits. The polypeptide is DNA-directed RNA polymerase subunit omega (Shewanella denitrificans (strain OS217 / ATCC BAA-1090 / DSM 15013)).